Consider the following 494-residue polypeptide: Glutamyl-tRNA(Gln) amidotransferase subunit A (494 aa).

Active-site charge relay system residues include lysine 80 and serine 160. Residues 140-168 (GNVISPWRRPGDTAPLAPGGSSGGSSSAV) form a disordered region. Residue serine 184 is the Acyl-ester intermediate of the active site.

It belongs to the amidase family. GatA subfamily. As to quaternary structure, heterotrimer of A, B and C subunits.

The catalysed reaction is L-glutamyl-tRNA(Gln) + L-glutamine + ATP + H2O = L-glutaminyl-tRNA(Gln) + L-glutamate + ADP + phosphate + H(+). Its function is as follows. Allows the formation of correctly charged Gln-tRNA(Gln) through the transamidation of misacylated Glu-tRNA(Gln) in organisms which lack glutaminyl-tRNA synthetase. The reaction takes place in the presence of glutamine and ATP through an activated gamma-phospho-Glu-tRNA(Gln). The sequence is that of Glutamyl-tRNA(Gln) amidotransferase subunit A from Novosphingobium aromaticivorans (strain ATCC 700278 / DSM 12444 / CCUG 56034 / CIP 105152 / NBRC 16084 / F199).